A 285-amino-acid polypeptide reads, in one-letter code: Probable endonuclease 4 (285 aa).

Zn(2+) contacts are provided by histidine 69, histidine 109, glutamate 145, aspartate 179, histidine 182, histidine 216, aspartate 229, histidine 231, and glutamate 261.

Belongs to the AP endonuclease 2 family. Zn(2+) is required as a cofactor.

The catalysed reaction is Endonucleolytic cleavage to 5'-phosphooligonucleotide end-products.. Its function is as follows. Endonuclease IV plays a role in DNA repair. It cleaves phosphodiester bonds at apurinic or apyrimidinic (AP) sites, generating a 3'-hydroxyl group and a 5'-terminal sugar phosphate. This is Probable endonuclease 4 from Salmonella paratyphi C (strain RKS4594).